Consider the following 185-residue polypeptide: MKSGEKDYSIKEAMIFSQRIAQLSKALWKSVEKDWQQWIKPYDLNINEHHILSIAYHLEGASISEIAKFGVMHVSTAFNFSKKLEERGYLVFSKKEDDKRNTYIEITEKGEELLLKLMEEYNPENNSVFNGALALRNFYGKFPENIELIAILRNIYGQDFIDIFEKSLENIEENFTEQEQKLVKK.

Residues 13-157 form the HTH marR-type domain; it reads AMIFSQRIAQ…LIAILRNIYG (145 aa). A DNA-binding region (H-T-H motif) is located at residues 63 to 86; the sequence is ISEIAKFGVMHVSTAFNFSKKLEE.

As to quaternary structure, homodimer.

Negative regulator of protease production and sporulation. The chain is HTH-type transcriptional regulator Hpr from Bacillus cytotoxicus (strain DSM 22905 / CIP 110041 / 391-98 / NVH 391-98).